We begin with the raw amino-acid sequence, 699 residues long: Polyribonucleotide nucleotidyltransferase (699 aa).

Residues Asp-493 and Asp-499 each coordinate Mg(2+). One can recognise a KH domain in the interval 560 to 620 (PLIANIEIDP…NKVNQAIEYI (61 aa)). Positions 630 to 697 (GDMFEGKITR…DSGRIQLGKA (68 aa)) constitute an S1 motif domain.

The protein belongs to the polyribonucleotide nucleotidyltransferase family. Mg(2+) is required as a cofactor.

Its subcellular location is the cytoplasm. It catalyses the reaction RNA(n+1) + phosphate = RNA(n) + a ribonucleoside 5'-diphosphate. In terms of biological role, involved in mRNA degradation. Catalyzes the phosphorolysis of single-stranded polyribonucleotides processively in the 3'- to 5'-direction. The chain is Polyribonucleotide nucleotidyltransferase from Thermosipho melanesiensis (strain DSM 12029 / CIP 104789 / BI429).